A 556-amino-acid polypeptide reads, in one-letter code: Formate--tetrahydrofolate ligase (556 aa).

Residue 65 to 72 (TPAGEGKS) participates in ATP binding.

The protein belongs to the formate--tetrahydrofolate ligase family.

It catalyses the reaction (6S)-5,6,7,8-tetrahydrofolate + formate + ATP = (6R)-10-formyltetrahydrofolate + ADP + phosphate. It participates in one-carbon metabolism; tetrahydrofolate interconversion. The protein is Formate--tetrahydrofolate ligase of Streptococcus pneumoniae (strain JJA).